The sequence spans 249 residues: Probable transcriptional regulatory protein Sfum_0996 (249 aa).

The protein belongs to the TACO1 family.

The protein localises to the cytoplasm. The sequence is that of Probable transcriptional regulatory protein Sfum_0996 from Syntrophobacter fumaroxidans (strain DSM 10017 / MPOB).